A 608-amino-acid polypeptide reads, in one-letter code: Extracellular metalloproteinase 5 (608 aa).

Residues 1 to 20 (MHGLLLAAAGLLSLPLHVIA) form the signal peptide. A propeptide spanning residues 21-244 (HPQPSTNLAG…VHNVVDYVSH (224 aa)) is cleaved from the precursor. The N-linked (GlcNAc...) asparagine glycan is linked to asparagine 285. Histidine 427 contacts Zn(2+). Residue glutamate 428 is part of the active site. Histidine 431 lines the Zn(2+) pocket. Asparagine 591 carries N-linked (GlcNAc...) asparagine glycosylation.

This sequence belongs to the peptidase M36 family. The cofactor is Zn(2+).

Its subcellular location is the secreted. Secreted metalloproteinase probably acting as a virulence factor. The chain is Extracellular metalloproteinase 5 (MEP5) from Trichophyton tonsurans (Scalp ringworm fungus).